The following is a 117-amino-acid chain: Large ribosomal subunit protein uL18 (117 aa).

The protein belongs to the universal ribosomal protein uL18 family. Part of the 50S ribosomal subunit; part of the 5S rRNA/L5/L18/L25 subcomplex. Contacts the 5S and 23S rRNAs.

Its function is as follows. This is one of the proteins that bind and probably mediate the attachment of the 5S RNA into the large ribosomal subunit, where it forms part of the central protuberance. In Phytoplasma mali (strain AT), this protein is Large ribosomal subunit protein uL18.